We begin with the raw amino-acid sequence, 139 residues long: Early placenta insulin-like peptide (139 aa).

An N-terminal signal peptide occupies residues 1–25 (MASLFRSYLPAIWLLLSQLLRESLA). Cystine bridges form between C31–C125, C43–C138, and C124–C129. The propeptide at 59–114 (LESGRPKEMVSTSNNKDGQALGTTSEFIPNLSPELKKPLSEGQPSLKKIILSRKKR) is c peptide.

This sequence belongs to the insulin family. In terms of tissue distribution, expressed in placenta, uterus and in fetal perichondrium. Expression levels were increased in both early placentas and molar pregnancies and were reduced in choriocarcinoma cells.

Its subcellular location is the secreted. May play an important role in trophoblast development and in the regulation of bone formation. The chain is Early placenta insulin-like peptide (INSL4) from Homo sapiens (Human).